A 252-amino-acid polypeptide reads, in one-letter code: Chitooligosaccharide deacetylase (252 aa).

Mg(2+) is bound by residues His61 and His125.

This sequence belongs to the YdjC deacetylase family. ChbG subfamily. Homodimer. Requires Mg(2+) as cofactor.

It is found in the cytoplasm. It catalyses the reaction N,N'-diacetylchitobiose + H2O = N-acetyl-beta-D-glucosaminyl-(1-&gt;4)-D-glucosamine + acetate. It carries out the reaction diacetylchitobiose-6'-phosphate + H2O = N'-monoacetylchitobiose-6'-phosphate + acetate. The protein operates within glycan degradation; chitin degradation. In terms of biological role, involved in the degradation of chitin. ChbG is essential for growth on the acetylated chitooligosaccharides chitobiose and chitotriose but is dispensable for growth on cellobiose and chitosan dimer, the deacetylated form of chitobiose. Deacetylation of chitobiose-6-P and chitotriose-6-P is necessary for both the activation of the chb promoter by the regulatory protein ChbR and the hydrolysis of phosphorylated beta-glucosides by the phospho-beta-glucosidase ChbF. Catalyzes the removal of only one acetyl group from chitobiose-6-P to yield monoacetylchitobiose-6-P, the inducer of ChbR and the substrate of ChbF. The protein is Chitooligosaccharide deacetylase of Salmonella newport (strain SL254).